Reading from the N-terminus, the 263-residue chain is MPEGPEIRRAADNLEAAIKGKPLTDVWFAFPQLKTYQSQLIGQHVTHVETRGKALLTHFSNDLTLYSHNQLYGVWRVVDTSEEPQTTRVLRVKLQTADKTILLYSASDIEMLRPEQLTTHPFLQRVGPDVLDPNLTPEVVKERLLSPRFRNRQFAGLLLDQAFLAGLGNYLRVEILWQVGLTGNHKAKDLNAAQLDALAHALLEIPRFSYATRGQVDENKHHGALFRFKVFHRDGELCERCGGIIEKTTLSSRPFYWCPGCQH.

Catalysis depends on Pro-2, which acts as the Schiff-base intermediate with DNA. Glu-3 functions as the Proton donor in the catalytic mechanism. Lys-53 (proton donor; for beta-elimination activity) is an active-site residue. DNA is bound by residues Gln-70, Arg-125, and Asn-169. The FPG-type zinc-finger motif lies at 229-263 (KVFHRDGELCERCGGIIEKTTLSSRPFYWCPGCQH). Residue Arg-253 is the Proton donor; for delta-elimination activity of the active site.

It belongs to the FPG family. It depends on Zn(2+) as a cofactor.

It carries out the reaction 2'-deoxyribonucleotide-(2'-deoxyribose 5'-phosphate)-2'-deoxyribonucleotide-DNA = a 3'-end 2'-deoxyribonucleotide-(2,3-dehydro-2,3-deoxyribose 5'-phosphate)-DNA + a 5'-end 5'-phospho-2'-deoxyribonucleoside-DNA + H(+). Involved in base excision repair of DNA damaged by oxidation or by mutagenic agents. Acts as a DNA glycosylase that recognizes and removes damaged bases. Has a preference for oxidized pyrimidines, such as thymine glycol, 5,6-dihydrouracil and 5,6-dihydrothymine. Has AP (apurinic/apyrimidinic) lyase activity and introduces nicks in the DNA strand. Cleaves the DNA backbone by beta-delta elimination to generate a single-strand break at the site of the removed base with both 3'- and 5'-phosphates. This chain is Endonuclease 8, found in Escherichia coli (strain 55989 / EAEC).